The sequence spans 332 residues: Endonuclease 8-like 2 (332 aa).

Pro-2 functions as the Schiff-base intermediate with DNA in the catalytic mechanism. Glu-3 serves as the catalytic Proton donor. Lys-50 functions as the Proton donor; for beta-elimination activity in the catalytic mechanism. Lys-50 is modified (N6-acetyllysine). Residues 59-121 (DEEMGPPGSS…EDDSEYLERD (63 aa)) are disordered. Phosphoserine is present on Ser-68. Basic and acidic residues predominate over residues 74–84 (PQKEVQKEGAA). The span at 94–104 (GQKTLDGSSRS) shows a compositional bias: polar residues. At Lys-154 the chain carries N6-acetyllysine. Asn-231 provides a ligand contact to DNA. The segment at 284–320 (QVYQKEQCPAGHQVMKEAFGPEDGLQRLTWWCPQCQP) adopts an FPG-type zinc-finger fold. Arg-310 serves as the catalytic Proton donor; for delta-elimination activity.

The protein belongs to the FPG family. As to quaternary structure, binds EP300. In terms of tissue distribution, detected in testis, skeletal muscle, heart, brain, placenta, lung, pancreas, kidney and liver.

It is found in the nucleus. The enzyme catalyses 2'-deoxyribonucleotide-(2'-deoxyribose 5'-phosphate)-2'-deoxyribonucleotide-DNA = a 3'-end 2'-deoxyribonucleotide-(2,3-dehydro-2,3-deoxyribose 5'-phosphate)-DNA + a 5'-end 5'-phospho-2'-deoxyribonucleoside-DNA + H(+). Acetylation of Lys-50 leads to loss of DNA nicking activity. Acetylation of Lys-154 has no effect. Functionally, involved in base excision repair of DNA damaged by oxidation or by mutagenic agents. Has DNA glycosylase activity towards 5-hydroxyuracil and other oxidized derivatives of cytosine with a preference for mismatched double-stranded DNA (DNA bubbles). Has low or no DNA glycosylase activity towards thymine glycol, 2-hydroxyadenine, hypoxanthine and 8-oxoguanine. Has AP (apurinic/apyrimidinic) lyase activity and introduces nicks in the DNA strand. Cleaves the DNA backbone by beta-delta elimination to generate a single-strand break at the site of the removed base with both 3'- and 5'-phosphates. This chain is Endonuclease 8-like 2 (NEIL2), found in Homo sapiens (Human).